The chain runs to 145 residues: FAD synthase (145 aa).

ATP-binding positions include 5–6 (TF), 10–13 (HPGH), D92, and Y119.

It belongs to the archaeal FAD synthase family. As to quaternary structure, homodimer. It depends on a divalent metal cation as a cofactor.

It catalyses the reaction FMN + ATP + H(+) = FAD + diphosphate. Its pathway is cofactor biosynthesis; FAD biosynthesis; FAD from FMN: step 1/1. Catalyzes the transfer of the AMP portion of ATP to flavin mononucleotide (FMN) to produce flavin adenine dinucleotide (FAD) coenzyme. This is FAD synthase from Methanothermus fervidus (strain ATCC 43054 / DSM 2088 / JCM 10308 / V24 S).